Here is a 199-residue protein sequence, read N- to C-terminus: NAD(P)H dehydrogenase (quinone) (199 aa).

Residues 4–190 (MLVLYYSAYG…DDARFQGRRV (187 aa)) enclose the Flavodoxin-like domain. FMN is bound by residues 10 to 15 (SAYGHM) and 78 to 80 (TRY). Tyr-12 contributes to the NAD(+) binding site. Trp-98 contacts substrate. FMN-binding positions include 113 to 119 (STATQHG) and His-134. The segment at 158–181 (GAPYGMTTTADGDGSRQPSAQELD) is disordered. Over residues 163–177 (MTTTADGDGSRQPSA) the composition is skewed to polar residues.

This sequence belongs to the WrbA family. It depends on FMN as a cofactor.

It carries out the reaction a quinone + NADH + H(+) = a quinol + NAD(+). The enzyme catalyses a quinone + NADPH + H(+) = a quinol + NADP(+). In Brucella ovis (strain ATCC 25840 / 63/290 / NCTC 10512), this protein is NAD(P)H dehydrogenase (quinone).